A 375-amino-acid polypeptide reads, in one-letter code: 2-methylcitrate synthase (375 aa).

Lys72 and His187 together coordinate substrate. Residue His222 is part of the active site. 255 to 259 (KIMGF) lines the CoA pocket. His261 is an active-site residue. Residue Arg270 participates in substrate binding. Residue Asp312 is part of the active site. Substrate is bound by residues Arg337 and Arg356.

The protein belongs to the citrate synthase family. As to quaternary structure, homodimer.

It catalyses the reaction propanoyl-CoA + oxaloacetate + H2O = (2S,3S)-2-methylcitrate + CoA + H(+). The enzyme catalyses oxaloacetate + acetyl-CoA + H2O = citrate + CoA + H(+). Its pathway is organic acid metabolism; propanoate degradation. It functions in the pathway carbohydrate metabolism; tricarboxylic acid cycle; isocitrate from oxaloacetate: step 1/2. Involved in the catabolism of short chain fatty acids (SCFA) via the tricarboxylic acid (TCA)(acetyl degradation route) and via the 2-methylcitrate cycle II (propionate degradation route). Catalyzes the Claisen condensation of propionyl-CoA and oxaloacetate (OAA) to yield 2-methylcitrate (2-MC) and CoA. Catalyzes the condensation of oxaloacetate with acetyl-CoA. The protein is 2-methylcitrate synthase (prpC) of Shewanella oneidensis (strain ATCC 700550 / JCM 31522 / CIP 106686 / LMG 19005 / NCIMB 14063 / MR-1).